Consider the following 219-residue polypeptide: Phosphate-specific transport system accessory protein PhoU homolog (219 aa).

This sequence belongs to the PhoU family. In terms of assembly, homodimer.

The protein localises to the cytoplasm. Its function is as follows. Plays a role in the regulation of phosphate uptake. Encoded together with proteins of the phosphate-specific transport (Pst) system in the polycistronic pstSCAB-phoU operon. This chain is Phosphate-specific transport system accessory protein PhoU homolog, found in Clostridium acetobutylicum (strain ATCC 824 / DSM 792 / JCM 1419 / IAM 19013 / LMG 5710 / NBRC 13948 / NRRL B-527 / VKM B-1787 / 2291 / W).